Here is a 336-residue protein sequence, read N- to C-terminus: Holliday junction branch migration complex subunit RuvB (336 aa).

The interval 2–186 (QDQEEERMIT…FGVICKLELY (185 aa)) is large ATPase domain (RuvB-L). Residues Leu25, Arg26, Gly67, Lys70, Thr71, Thr72, 133 to 135 (EDF), Arg176, Tyr186, and Arg223 each bind ATP. Residue Thr71 coordinates Mg(2+). Residues 187 to 257 (NNKQLTAIVK…VAEEALILLE (71 aa)) form a small ATPAse domain (RuvB-S) region. Positions 260-336 (SLGLDNTDKK…YEHFNIPSAE (77 aa)) are head domain (RuvB-H). Residues Arg296, Arg315, and Arg320 each contribute to the DNA site.

Belongs to the RuvB family. In terms of assembly, homohexamer. Forms an RuvA(8)-RuvB(12)-Holliday junction (HJ) complex. HJ DNA is sandwiched between 2 RuvA tetramers; dsDNA enters through RuvA and exits via RuvB. An RuvB hexamer assembles on each DNA strand where it exits the tetramer. Each RuvB hexamer is contacted by two RuvA subunits (via domain III) on 2 adjacent RuvB subunits; this complex drives branch migration. In the full resolvosome a probable DNA-RuvA(4)-RuvB(12)-RuvC(2) complex forms which resolves the HJ.

The protein resides in the cytoplasm. It carries out the reaction ATP + H2O = ADP + phosphate + H(+). Its function is as follows. The RuvA-RuvB-RuvC complex processes Holliday junction (HJ) DNA during genetic recombination and DNA repair, while the RuvA-RuvB complex plays an important role in the rescue of blocked DNA replication forks via replication fork reversal (RFR). RuvA specifically binds to HJ cruciform DNA, conferring on it an open structure. The RuvB hexamer acts as an ATP-dependent pump, pulling dsDNA into and through the RuvAB complex. RuvB forms 2 homohexamers on either side of HJ DNA bound by 1 or 2 RuvA tetramers; 4 subunits per hexamer contact DNA at a time. Coordinated motions by a converter formed by DNA-disengaged RuvB subunits stimulates ATP hydrolysis and nucleotide exchange. Immobilization of the converter enables RuvB to convert the ATP-contained energy into a lever motion, pulling 2 nucleotides of DNA out of the RuvA tetramer per ATP hydrolyzed, thus driving DNA branch migration. The RuvB motors rotate together with the DNA substrate, which together with the progressing nucleotide cycle form the mechanistic basis for DNA recombination by continuous HJ branch migration. Branch migration allows RuvC to scan DNA until it finds its consensus sequence, where it cleaves and resolves cruciform DNA. The polypeptide is Holliday junction branch migration complex subunit RuvB (Alkaliphilus metalliredigens (strain QYMF)).